A 297-amino-acid chain; its full sequence is uncharacterized protein (297 aa).

The next 9 helical transmembrane spans lie at 1–21 (MSWIIFYTIIAALLILDLGII), 32–52 (GSILLSLFYFIISCLFGIYVY), 72–92 (AMALDNIFIISIIFQFFNIPS), 98–118 (VLFFGIIGVIIFKAIIIYGGI), 120–140 (LIHKFSWLLYILAVILIATGI), 194–214 (ILIETIDLVFAIDSIAAIFAI), 218–238 (VYIIYTSNIFAILGLRSLFFC), 253–273 (LALILIFIGFKIFIHHYIEIP), and 274–294 (AYISLTVTISSLLFGIIASIL).

The protein belongs to the TerC family.

The protein resides in the cell membrane. This is an uncharacterized protein from Rickettsia prowazekii (strain Madrid E).